Reading from the N-terminus, the 90-residue chain is Barrier-to-autointegration factor (90 aa).

It belongs to the BAF family. May interact with MAD1.

The protein localises to the nucleus. Its subcellular location is the cytoplasm. The protein resides in the chromosome. Its function is as follows. Plays fundamental roles in nuclear assembly, chromatin organization, gene expression and gonad development. May potently compress chromatin structure and be involved in membrane recruitment and chromatin decondensation during nuclear assembly. Functions are required in both M phase and interphase of the cell cycle. This is Barrier-to-autointegration factor (baf) from Drosophila melanogaster (Fruit fly).